Here is a 202-residue protein sequence, read N- to C-terminus: Orotate phosphoribosyltransferase (202 aa).

Residues R94, K98, H100, and 120–128 (EDLISTGGS) contribute to the 5-phospho-alpha-D-ribose 1-diphosphate site. Position 124 (S124) interacts with orotate.

It belongs to the purine/pyrimidine phosphoribosyltransferase family. PyrE subfamily. Homodimer. Mg(2+) is required as a cofactor.

It carries out the reaction orotidine 5'-phosphate + diphosphate = orotate + 5-phospho-alpha-D-ribose 1-diphosphate. It participates in pyrimidine metabolism; UMP biosynthesis via de novo pathway; UMP from orotate: step 1/2. Catalyzes the transfer of a ribosyl phosphate group from 5-phosphoribose 1-diphosphate to orotate, leading to the formation of orotidine monophosphate (OMP). This chain is Orotate phosphoribosyltransferase, found in Staphylococcus haemolyticus (strain JCSC1435).